A 481-amino-acid chain; its full sequence is FAD-linked oxidoreductase afoF (481 aa).

The signal sequence occupies residues M1–A16. The 176-residue stretch at S52 to Q227 folds into the FAD-binding PCMH-type domain. N82 is a glycosylation site (N-linked (GlcNAc...) asparagine). Position 92 is a pros-8alpha-FAD histidine (H92). Residues N196, N241, N276, N309, N312, and N376 are each glycosylated (N-linked (GlcNAc...) asparagine).

This sequence belongs to the oxygen-dependent FAD-linked oxidoreductase family. FAD is required as a cofactor.

Its function is as follows. FAD-linked oxidoreductase; part of the gene cluster that mediates the biosynthesis of asperfuranone, a probable antitumor agent. The polyketide synthase afoG is responsible for producing the 3,5-dimethyloctadienone moiety from acetyl-CoA, three malonyl-CoA, and two S-adenosyl methionines (SAM). The 3,5-dimethyloctadienone moiety is then loaded onto the SAT domain of afoE and extended with four malonyl-CoA and one SAM, which leads to the formation of 2,4-dihydroxy-6-(5,7-dimethyl-2-oxo-trans-3-trans-5-nonadienyl)-3-methylbenzaldehyde (compound 2) after reductive release and aldol condensation. AfoD is the next enzyme in the biosynthesis sequence and hydroxylates the side chain at the benzylic position of compound 2. After benzylic hydroxylation, a furan ring is formed after five-member ring hemiacetal formation and water elimination. AfoF and afoC are proposed to oxidize the R-diketone proton and to reduce the unconjugated carbonyl group, respectively, to generate asperfuranone. Since no intermediates could be isolated from afoF and afoC deletants, the sequence of these two enzymes is not fully understood. Moreover, since afoC deletant still produces a small amount of asperfuranone, other endogenous oxidoreductases might catalyze the same reaction with much less efficiency. This is FAD-linked oxidoreductase afoF from Emericella nidulans (strain FGSC A4 / ATCC 38163 / CBS 112.46 / NRRL 194 / M139) (Aspergillus nidulans).